A 429-amino-acid polypeptide reads, in one-letter code: Phosphomethylpyrimidine synthase (429 aa).

Substrate-binding positions include Asn-66, Met-95, Tyr-124, His-163, 185 to 187 (SRG), 226 to 229 (DGLR), and Glu-265. A Zn(2+)-binding site is contributed by His-269. Tyr-292 lines the substrate pocket. Residue His-333 participates in Zn(2+) binding. [4Fe-4S] cluster contacts are provided by Cys-409, Cys-412, and Cys-416.

The protein belongs to the ThiC family. Requires [4Fe-4S] cluster as cofactor.

The catalysed reaction is 5-amino-1-(5-phospho-beta-D-ribosyl)imidazole + S-adenosyl-L-methionine = 4-amino-2-methyl-5-(phosphooxymethyl)pyrimidine + CO + 5'-deoxyadenosine + formate + L-methionine + 3 H(+). Its pathway is cofactor biosynthesis; thiamine diphosphate biosynthesis. Functionally, catalyzes the synthesis of the hydroxymethylpyrimidine phosphate (HMP-P) moiety of thiamine from aminoimidazole ribotide (AIR) in a radical S-adenosyl-L-methionine (SAM)-dependent reaction. This Carboxydothermus hydrogenoformans (strain ATCC BAA-161 / DSM 6008 / Z-2901) protein is Phosphomethylpyrimidine synthase.